Consider the following 211-residue polypeptide: ATP-dependent dethiobiotin synthetase BioD (211 aa).

An ATP-binding site is contributed by 13–18 (GVGKTV). Residue Thr-17 participates in Mg(2+) binding. The active site involves Lys-33. Mg(2+) contacts are provided by Cys-47 and Glu-101. ATP-binding positions include 101–104 (EGAG), 185–187 (PWL), and Asn-192.

Belongs to the dethiobiotin synthetase family. As to quaternary structure, homodimer. Requires Mg(2+) as cofactor.

Its subcellular location is the cytoplasm. The catalysed reaction is (7R,8S)-7,8-diammoniononanoate + CO2 + ATP = (4R,5S)-dethiobiotin + ADP + phosphate + 3 H(+). Its pathway is cofactor biosynthesis; biotin biosynthesis; biotin from 7,8-diaminononanoate: step 1/2. Its function is as follows. Catalyzes a mechanistically unusual reaction, the ATP-dependent insertion of CO2 between the N7 and N8 nitrogen atoms of 7,8-diaminopelargonic acid (DAPA, also called 7,8-diammoniononanoate) to form a ureido ring. This is ATP-dependent dethiobiotin synthetase BioD from Bradyrhizobium diazoefficiens (strain JCM 10833 / BCRC 13528 / IAM 13628 / NBRC 14792 / USDA 110).